The chain runs to 409 residues: Probable sodium/metabolite cotransporter BASS6, chloroplastic (409 aa).

The N-terminal 49 residues, 1–49, are a transit peptide targeting the chloroplast; it reads MSVITTPIETLHLKSTLRLLPRAVYRSQRIQVFPPNIFSNTSLSSPLRI. The next 9 membrane-spanning stretches (helical) occupy residues 100–120, 121–141, 170–190, 191–211, 221–241, 253–273, 285–305, 316–336, and 381–401; these read ILPH…PSFT, WFTS…VGIN, VLGF…TPIG, AGIM…ATFL, IVMT…LSLL, GMIS…LLLN, PFLP…PLAL, ATIL…GYFL, and IPPA…VLIW.

This sequence belongs to the bile acid:sodium symporter (BASS) (TC 2.A.28) family.

It localises to the membrane. Its subcellular location is the plastid. The protein resides in the chloroplast envelope. May function as sodium-coupled metabolite transporter across the chloroplast envelope. This is Probable sodium/metabolite cotransporter BASS6, chloroplastic (BASS6) from Arabidopsis thaliana (Mouse-ear cress).